The primary structure comprises 555 residues: Protein NRT1/ PTR FAMILY 5.12 (555 aa).

Helical transmembrane passes span 53-73 and 83-103; these read FAYFGIASNLITYFTEALGES and LWLGTAAFLPLIWGSIADSFL. Residue T108 is modified to Phosphothreonine. 10 consecutive transmembrane segments (helical) span residues 109 to 129, 148 to 168, 190 to 210, 221 to 241, 315 to 335, 357 to 377, 401 to 421, 443 to 463, 482 to 502, and 526 to 546; these read ILLTSSFYIMGLGLLTFSATI, VIIFFCALYLIALGEGGFKVC, SYFNWLYFAISIGILTTRLVT, LGYAIPCLSMMLALFLFLLGI, AVLSLIPIWLCSLVFGIVFAQ, VPAATLQCFISLAILVFIPIY, ISTGIFLSIISMVIAALVEMK, VCWLIPQYILFGVSDVFTMVG, ALYLSIIGIGNFLSSFMVSVI, and YFYWLLACLSSLAFIFTVYFA.

This sequence belongs to the major facilitator superfamily. Proton-dependent oligopeptide transporter (POT/PTR) (TC 2.A.17) family. In terms of tissue distribution, expressed in shoots and roots.

The protein resides in the membrane. This is Protein NRT1/ PTR FAMILY 5.12 (NPF5.12) from Arabidopsis thaliana (Mouse-ear cress).